The following is a 326-amino-acid chain: Beta-ketoacyl-[acyl-carrier-protein] synthase III (326 aa).

Residues Cys120 and His253 contribute to the active site. Residues 254–258 are ACP-binding; the sequence is QANIR. Asn283 is a catalytic residue.

The protein belongs to the thiolase-like superfamily. FabH family. Homodimer.

It localises to the cytoplasm. The enzyme catalyses malonyl-[ACP] + acetyl-CoA + H(+) = 3-oxobutanoyl-[ACP] + CO2 + CoA. Its pathway is lipid metabolism; fatty acid biosynthesis. Catalyzes the condensation reaction of fatty acid synthesis by the addition to an acyl acceptor of two carbons from malonyl-ACP. Catalyzes the first condensation reaction which initiates fatty acid synthesis and may therefore play a role in governing the total rate of fatty acid production. Possesses both acetoacetyl-ACP synthase and acetyl transacylase activities. Its substrate specificity determines the biosynthesis of branched-chain and/or straight-chain of fatty acids. This is Beta-ketoacyl-[acyl-carrier-protein] synthase III from Ralstonia nicotianae (strain ATCC BAA-1114 / GMI1000) (Ralstonia solanacearum).